The following is a 453-amino-acid chain: Alpha-galacturonidase (453 aa).

11-72 is an NAD(+) binding site; it reads IKIAYIGGGS…SQWEYKSVDS (62 aa). Residue Asn151 participates in substrate binding. Cys173 is a binding site for Mn(2+). His174 serves as the catalytic Proton donor. Residue His209 participates in Mn(2+) binding.

This sequence belongs to the glycosyl hydrolase 4 family. In terms of assembly, homotetramer. The cofactor is NAD(+). Mn(2+) is required as a cofactor.

It catalyses the reaction [(1-&gt;4)-alpha-D-galacturonosyl](n) + H2O = alpha-D-galacturonate + [(1-&gt;4)-alpha-D-galacturonosyl](n-1). Its function is as follows. Alpha-galacturonidase able to catalyze the hydrolysis of the chromogenic substrate p-nitrophenyl-alpha-D-galacturonic acid (pNPalphaGalUA). It is probable that alpha-1,4-di-galacturonate (GalUA(2)) is the naturally occurring substrate. This chain is Alpha-galacturonidase, found in Thermoanaerobacter italicus (strain DSM 9252 / Ab9).